The following is a 988-amino-acid chain: Voltage-gated delayed rectifier potassium channel KCNH5 (988 aa).

At 1 to 217 (MPGGKRGLVA…LHYCAFKTTW (217 aa)) the chain is on the cytoplasmic side. The region spanning 14–86 (TFLENIVRRS…TIEKVRQTFD (73 aa)) is the PAS domain. Residues 91–143 (NCFEVLLYKKNRTPVWFYMQIAPIRNEHEKVVLFLCTFKDITLFKQPIEDDST) form the PAC domain. A helical transmembrane segment spans residues 218–238 (DWVILILTFYTAIMVPYNVSF). Over 239-243 (KTKQN) the chain is Extracellular. The helical transmembrane segment at 244-264 (NIAWLVLDSVVDVIFLVDIVL) threads the bilayer. Topologically, residues 265-291 (NFHTTFVGPGGEVISDPKLIRMNYLKT) are cytoplasmic. The chain crosses the membrane as a helical span at residues 292-312 (WFVIDLLSCLPYDIINAFENV). The Extracellular portion of the chain corresponds to 313–319 (DEGISSL). A helical; Voltage-sensor transmembrane segment spans residues 320–340 (FSSLKVVRLLRLGRVARKLDH). At 341–346 (YLEYGA) the chain is on the cytoplasmic side. The chain crosses the membrane as a helical span at residues 347–367 (AVLVLLVCVFGLVAHWLACIW). Residues 368–419 (YSIGDYEVIDEVTNTIQIDSWLYQLALSIGTPYRYNTSAGIWEGGPSKDSLY) are Extracellular-facing. Residue N403 is glycosylated (N-linked (GlcNAc...) asparagine). Positions 420 to 440 (VSSLYFTMTSLTTIGFGNIAP) form an intramembrane region, pore-forming. The Selectivity filter motif lies at 432–437 (TIGFGN). Topologically, residues 441–446 (TTDVEK) are extracellular. A helical transmembrane segment spans residues 447–467 (MFSVAMMMVGSLLYATIFGNV). At 468–988 (TTIFQQMYAN…PESDKDEINF (521 aa)) the chain is on the cytoplasmic side. Residue 550–668 (AFRLASDGCL…SFSRNLTLTC (119 aa)) coordinates a nucleoside 3',5'-cyclic phosphate. The calmodulin-binding stretch occupies residues 704-715 (HPVRKLFQKFKQ). The tract at residues 721-741 (IQGSAQSDPERSQLQVESRPL) is disordered. Residues 723–741 (GSAQSDPERSQLQVESRPL) show a composition bias toward polar residues. K785 is covalently cross-linked (Glycyl lysine isopeptide (Lys-Gly) (interchain with G-Cter in ubiquitin)). Positions 838 to 893 (GLLSEDPKGSDSENSVTKNPLRKTDSCDSGITKSDLRLDKAGEARSPLEHSPSQAD) are disordered. Positions 871 to 885 (SDLRLDKAGEARSPL) are enriched in basic and acidic residues. S883 is subject to Phosphoserine. The CAD (involved in subunit assembly) stretch occupies residues 909–948 (TLQEVKHELKEDIQLLSCRMTALEKQVAEILKLLSEKSVP).

Belongs to the potassium channel family. H (Eag) (TC 1.A.1.20) subfamily. Kv10.2/KCNH5 sub-subfamily. In terms of assembly, homotetramer. The potassium channel is probably composed of a homo- or heterotetrameric complex of pore-forming alpha subunits that can associate with modulating beta subunits. Heteromultimer with KCNH1/EAG.

It is found in the membrane. It carries out the reaction K(+)(in) = K(+)(out). In terms of biological role, pore-forming (alpha) subunit of a voltage-gated delayed rectifier potassium channel that mediates outward-rectifying potassium currents which, on depolarization, reaches a steady-state level and do not inactivate. The kinetic is characterized by a slow activation time course and a small voltage dependence of the activation time constants, therefore, starts to open at more negative voltages. The activation kinetics depend on the prepulse potential and external divalent cation concentration. The time course of activation is biphasic with a fast and a slowly activating current component. With negative prepulses, the current activation is delayed and slowed down several fold, whereas more positive prepulses speed up activation, therefore the activation rate depends on holding potential. This Mus musculus (Mouse) protein is Voltage-gated delayed rectifier potassium channel KCNH5.